A 382-amino-acid polypeptide reads, in one-letter code: Flap endonuclease 1 (382 aa).

The segment at 1-104 (MGILGLSKLI…GELAKRAERR (104 aa)) is N-domain. Mg(2+) is bound at residue Asp34. Residues Arg47 and Arg70 each coordinate DNA. Position 86 (Asp86) interacts with Mg(2+). Residues 95–118 (GELAKRAERREDAQKALEKATEAG) form a disordered region. Positions 96 to 115 (ELAKRAERREDAQKALEKAT) are enriched in basic and acidic residues. The interval 122 to 253 (DMDKFNRRLV…KRATELMNSY (132 aa)) is I-domain. Residues Glu158, Glu160, Asp179, and Asp181 each contribute to the Mg(2+) site. Glu158 is a binding site for DNA. 2 residues coordinate DNA: Gly231 and Asp233. Asp233 lines the Mg(2+) pocket. The segment at 336 to 344 (TQGRLDSFF) is interaction with PCNA. Positions 353-382 (TTPKRKADDKNNVQQKKSKTAGNTKGKRPK) are disordered. A compositionally biased stretch (polar residues) spans 364–375 (NVQQKKSKTAGN).

The protein belongs to the XPG/RAD2 endonuclease family. FEN1 subfamily. In terms of assembly, interacts with PCNA. Three molecules of FEN1 bind to one PCNA trimer with each molecule binding to one PCNA monomer. PCNA stimulates the nuclease activity without altering cleavage specificity. Requires Mg(2+) as cofactor. Post-translationally, phosphorylated. Phosphorylation upon DNA damage induces relocalization to the nuclear plasma.

The protein localises to the nucleus. Its subcellular location is the nucleolus. It localises to the nucleoplasm. It is found in the mitochondrion. Its function is as follows. Structure-specific nuclease with 5'-flap endonuclease and 5'-3' exonuclease activities involved in DNA replication and repair. During DNA replication, cleaves the 5'-overhanging flap structure that is generated by displacement synthesis when DNA polymerase encounters the 5'-end of a downstream Okazaki fragment. It enters the flap from the 5'-end and then tracks to cleave the flap base, leaving a nick for ligation. Also involved in the long patch base excision repair (LP-BER) pathway, by cleaving within the apurinic/apyrimidinic (AP) site-terminated flap. Acts as a genome stabilization factor that prevents flaps from equilibrating into structures that lead to duplications and deletions. Also possesses 5'-3' exonuclease activity on nicked or gapped double-stranded DNA, and exhibits RNase H activity. Also involved in replication and repair of rDNA and in repairing mitochondrial DNA. The sequence is that of Flap endonuclease 1 from Glossina morsitans morsitans (Savannah tsetse fly).